We begin with the raw amino-acid sequence, 355 residues long: Arginine kinase (355 aa).

Positions 8-90 (KLQAGFKKLE…FDPIIEDYHV (83 aa)) constitute a Phosphagen kinase N-terminal domain. 63–67 (GVGIY) is a binding site for L-arginine. Positions 118 to 355 (YVISTRVRCG…LQLIKMEKEM (238 aa)) constitute a Phosphagen kinase C-terminal domain. Residues 121–125 (STRVR) and histidine 184 each bind ATP. Glutamate 224 serves as a coordination point for L-arginine. Arginine 228 is a binding site for ATP. Position 270 (cysteine 270) interacts with L-arginine. Residues 279 to 283 (RASVH) and 308 to 313 (RGTRGE) contribute to the ATP site. Glutamate 313 lines the L-arginine pocket.

Belongs to the ATP:guanido phosphotransferase family. As to quaternary structure, monomer.

The enzyme catalyses L-arginine + ATP = N(omega)-phospho-L-arginine + ADP + H(+). The sequence is that of Arginine kinase from Penaeus japonicus (Kuruma prawn).